A 190-amino-acid polypeptide reads, in one-letter code: Dynein axonemal light chain 1 (190 aa).

Residue alanine 2 is modified to N-acetylalanine. LRR repeat units follow at residues asparagine 49–lysine 70, asparagine 71–glycine 92, threonine 94–lysine 115, and lysine 116–alanine 137. At serine 56 the chain carries Phosphoserine. Positions asparagine 150–asparagine 190 constitute an LRRCT domain.

The protein belongs to the dynein light chain LC1-type family. Interacts with ZMYND10 (via C-terminus). Interacts with DNAH5, a outer arm dynein heavy chain. Interacts with tubulin located within the A-tubule of the outer doublets in a ATP-independent manner. Expressed in tissues carrying motile cilia such as respiratory epithelia, ependyma and testis.

It is found in the cytoplasm. Its subcellular location is the cytoskeleton. It localises to the cilium axoneme. Functionally, part of the multisubunit axonemal ATPase complexes that generate the force for cilia motility and govern beat frequency. Component of the outer arm dynein (ODA). May be involved in a mechanosensory feedback mechanism controlling ODA activity based on external conformational cues by tethering the outer arm dynein heavy chain (DNAH5) to the microtubule within the axoneme. Important for ciliary function in the airways and for the function of the cilia that produce the nodal flow essential for the determination of the left-right asymmetry. The sequence is that of Dynein axonemal light chain 1 from Homo sapiens (Human).